A 146-amino-acid chain; its full sequence is Large ribosomal subunit protein uL15 (146 aa).

Residues 1–56 (MRLHDLRPVPGSRQKPTRKGQGIGSGLGKTAGRGQKGQKARSGGGVRPGFEGGQMP) are disordered. 2 stretches are compositionally biased toward gly residues: residues 21-35 (QGIG…GRGQ) and 42-52 (SGGGVRPGFEG).

The protein belongs to the universal ribosomal protein uL15 family. Part of the 50S ribosomal subunit.

In terms of biological role, binds to the 23S rRNA. This Carboxydothermus hydrogenoformans (strain ATCC BAA-161 / DSM 6008 / Z-2901) protein is Large ribosomal subunit protein uL15.